Here is a 65-residue protein sequence, read N- to C-terminus: DNA-directed RNA polymerase subunit Rpo10 (65 aa).

Zn(2+) is bound by residues Cys-7, Cys-10, Cys-44, and Cys-45.

Belongs to the archaeal Rpo10/eukaryotic RPB10 RNA polymerase subunit family. Part of the RNA polymerase complex. It depends on Zn(2+) as a cofactor.

The protein localises to the cytoplasm. The enzyme catalyses RNA(n) + a ribonucleoside 5'-triphosphate = RNA(n+1) + diphosphate. Its function is as follows. DNA-dependent RNA polymerase (RNAP) catalyzes the transcription of DNA into RNA using the four ribonucleoside triphosphates as substrates. This chain is DNA-directed RNA polymerase subunit Rpo10, found in Pyrococcus furiosus (strain ATCC 43587 / DSM 3638 / JCM 8422 / Vc1).